We begin with the raw amino-acid sequence, 109 residues long: ATP-dependent Clp protease adapter protein ClpS (109 aa).

A disordered region spans residues 1–20 (MAERKQGGQGNGVGSSVVTE).

Belongs to the ClpS family. Binds to the N-terminal domain of the chaperone ClpA.

Involved in the modulation of the specificity of the ClpAP-mediated ATP-dependent protein degradation. The protein is ATP-dependent Clp protease adapter protein ClpS of Caulobacter vibrioides (strain NA1000 / CB15N) (Caulobacter crescentus).